The chain runs to 404 residues: Multidrug resistance protein MdtG (404 aa).

The next 11 helical transmembrane spans lie at 19-39, 56-76, 90-110, 113-133, 144-164, 171-191, 222-242, 254-274, 288-308, 317-337, and 376-396; these read LGCF…PLYV, LVFS…GGLA, LGMA…QFLI, ALLG…ATQV, TLST…GLLA, PVFF…FFFI, LFVT…ILTL, IAFI…LSAP, ILIV…FVQT, FLLG…LVYN, and AVFC…WNSL.

It belongs to the major facilitator superfamily. DHA1 family. MdtG (TC 2.A.1.2.20) subfamily.

Its subcellular location is the cell inner membrane. The protein is Multidrug resistance protein MdtG of Salmonella typhimurium (strain LT2 / SGSC1412 / ATCC 700720).